A 229-amino-acid chain; its full sequence is Leucyl/phenylalanyl-tRNA--protein transferase (229 aa).

This sequence belongs to the L/F-transferase family.

The protein localises to the cytoplasm. The enzyme catalyses N-terminal L-lysyl-[protein] + L-leucyl-tRNA(Leu) = N-terminal L-leucyl-L-lysyl-[protein] + tRNA(Leu) + H(+). The catalysed reaction is N-terminal L-arginyl-[protein] + L-leucyl-tRNA(Leu) = N-terminal L-leucyl-L-arginyl-[protein] + tRNA(Leu) + H(+). It carries out the reaction L-phenylalanyl-tRNA(Phe) + an N-terminal L-alpha-aminoacyl-[protein] = an N-terminal L-phenylalanyl-L-alpha-aminoacyl-[protein] + tRNA(Phe). Functions in the N-end rule pathway of protein degradation where it conjugates Leu, Phe and, less efficiently, Met from aminoacyl-tRNAs to the N-termini of proteins containing an N-terminal arginine or lysine. This Desulforapulum autotrophicum (strain ATCC 43914 / DSM 3382 / VKM B-1955 / HRM2) (Desulfobacterium autotrophicum) protein is Leucyl/phenylalanyl-tRNA--protein transferase.